We begin with the raw amino-acid sequence, 193 residues long: Molybdenum cofactor guanylyltransferase (193 aa).

GTP-binding positions include 8–10 (LAG), lysine 21, aspartate 67, and aspartate 98. Aspartate 98 lines the Mg(2+) pocket.

The protein belongs to the MobA family. As to quaternary structure, monomer. The cofactor is Mg(2+).

It is found in the cytoplasm. It carries out the reaction Mo-molybdopterin + GTP + H(+) = Mo-molybdopterin guanine dinucleotide + diphosphate. In terms of biological role, transfers a GMP moiety from GTP to Mo-molybdopterin (Mo-MPT) cofactor (Moco or molybdenum cofactor) to form Mo-molybdopterin guanine dinucleotide (Mo-MGD) cofactor. The protein is Molybdenum cofactor guanylyltransferase of Cereibacter sphaeroides (Rhodobacter sphaeroides).